Reading from the N-terminus, the 586-residue chain is MTVRLASVSISNFRSCKSTSAILRPFTALVGYNNAGKSNIILAIKWLLDGSLISESDVYDPTHPVSVEGVIQGITDDTLSLLTEENQQKIAPFIIDGTLTFARRQEFNKETGKAKKSLDVYDGTTWKKNPGGIDGAISNIFPEPIHIPAMSDAVEDSTKCKNTTTIGKILSAIVSEIKQEHEEKFSKNISEIGKYLSHNGENRLESLNKIDSGVNKKVNQFFPDVSVKLHFPTPTLDEIFKSGTLKVFESREDEPVMRDISRFGHGTQRSIQMALIQYLAEIKKENSESKKSNTLIFIDEPELYLHPSAINSVRESLVTLSESGYQVIISTHSASMLSAKHAANAIQVCKDSNGTIARKTISEKIEELYKSSSPQLHSAFTLSNSSYLLFSEEVLLVEGKTETNVLYALYKKINGHELNPSKICIVAVDGKGSLFKMSQIINAIGIKTRILADCDFLSNILLTEHKDLLSTECDNLLTALIESINSGELSLNTKVTTFESFKSISSKDFIKICNHEKTQKHIHEIHQKLKDNGIYIWKSGDIEAVYGFGKKQTEWDSLLDCLCDESKDVRAVIKKYDEMEDFIKWI.

Residues 1-163 (MTVRLASVSI…VEDSTKCKNT (163 aa)) form an ATPase domain N-terminus region. 34–38 (NAGKS) is an ATP binding site. The dimerization domain stretch occupies residues 164-270 (TTIGKILSAI…SRFGHGTQRS (107 aa)). The tract at residues 271 to 390 (IQMALIQYLA…TLSNSSYLLF (120 aa)) is ATPase domain C-terminus. Positions 393–586 (EVLLVEGKTE…DEMEDFIKWI (194 aa)) are toprim domain. Positions 398, 402, 453, 455, 541, and 543 each coordinate a divalent metal cation. Residue Arg-570 is the Stabilizes transition state or protonates leaving group of the active site.

Belongs to the class 1 OLD nuclease family. Mg(2+) serves as cofactor.

The enzyme catalyses Exonucleolytic cleavage in the 5'- to 3'-direction to yield nucleoside 5'-phosphates.. An exonuclease that acts preferentially on linear dsDNA, processively degrading it from 5'-3', releasing 5'-phosphomononucleotides. Initiates on 5'-phosphate and 5'-hydroxyl ends. Also acts on linear ssDNA, nicked DNA and RNA. ATP enhances but is not necessary for exonuclease activity; has ATPase activity that is not stimulated by DNA. The old protein kills E.coli recB and recC mutants and interferes with phage lambda growth. Both the exonuclease and ATPase activities are required in vivo. Probably interferes with lambda phage by degrading its linear DNA. Isolated as a mutant able to lysogenize E.coli strain C cells normally not susceptible to lysis by phage P2. The chain is Old nuclease from Enterobacteriaceae (Bacteriophage P2).